A 626-amino-acid chain; its full sequence is 1-deoxy-D-xylulose-5-phosphate synthase 2 (626 aa).

Thiamine diphosphate-binding positions include His-74 and 115–117 (GHA). Residue Asp-146 participates in Mg(2+) binding. Thiamine diphosphate-binding positions include 147-148 (GS), Asn-175, Phe-286, and Glu-368. Residue Asn-175 coordinates Mg(2+).

The protein belongs to the transketolase family. DXPS subfamily. Homodimer. Mg(2+) is required as a cofactor. Requires thiamine diphosphate as cofactor.

The enzyme catalyses D-glyceraldehyde 3-phosphate + pyruvate + H(+) = 1-deoxy-D-xylulose 5-phosphate + CO2. It participates in metabolic intermediate biosynthesis; 1-deoxy-D-xylulose 5-phosphate biosynthesis; 1-deoxy-D-xylulose 5-phosphate from D-glyceraldehyde 3-phosphate and pyruvate: step 1/1. Functionally, catalyzes the acyloin condensation reaction between C atoms 2 and 3 of pyruvate and glyceraldehyde 3-phosphate to yield 1-deoxy-D-xylulose-5-phosphate (DXP). This is 1-deoxy-D-xylulose-5-phosphate synthase 2 from Geobacter sulfurreducens (strain ATCC 51573 / DSM 12127 / PCA).